The chain runs to 199 residues: LPICPSGSVNCQVSLGELFDRAVKLSHYIHFLSSEMFNEFDERYAQGRGFITKAVNGCHTASLTTPEDKEQAQQIHHEDLLNLVLGVLRSWNDPLLHLVTEVQRIKEAPDTILWKAVEIEEQNKRLLEGMEKIIGRVQPGDTGNEVYSRWSGLPSLQLADEDSRLFAFYNLLHCGRRDSHKIDNYLKLLKCRLIHDSNC.

3 disulfides stabilise this stretch: Cys4–Cys11, Cys58–Cys174, and Cys191–Cys199.

It belongs to the somatotropin/prolactin family.

It localises to the secreted. This Crocodylus novaeguineae (Crocodile) protein is Prolactin-2.